The chain runs to 120 residues: Thiosulfate sulfurtransferase 16, chloroplastic (120 aa).

Positions 20–120 constitute a Rhodanese domain; it reads LLAGHRYLDV…WAKNGLPTKA (101 aa). C80 serves as the catalytic Cysteine persulfide intermediate. Residue R85 participates in substrate binding.

In terms of assembly, monomer.

The protein localises to the plastid. It localises to the chloroplast. It catalyses the reaction thiosulfate + hydrogen cyanide = thiocyanate + sulfite + 2 H(+). In terms of biological role, thought to act during the early stages of leaf senescence. Catalyzes the transfer of a sulfur ion from a donor to cyanide or to other thiol compounds. Substrate preference is thiosulfate &gt; 3-mercaptopyruvate. The chain is Thiosulfate sulfurtransferase 16, chloroplastic (STR16) from Arabidopsis thaliana (Mouse-ear cress).